The sequence spans 757 residues: RNA-directed RNA polymerase catalytic subunit (757 aa).

Residues 52-82 (RGKWTTNTETGAPQLNPIDGPLPEDNEPSGY) are disordered. Residues 55 to 64 (WTTNTETGAP) are compositionally biased toward polar residues. 2 short sequence motifs (nuclear localization signal) span residues 187–195 (RKRRVRDNM) and 203–216 (RTIG…NKRS). The promoter-binding site stretch occupies residues 249–256 (RGFVYFVE). Residues 286–483 (VRKMMTNSQD…GINMSKKKSY (198 aa)) enclose the RdRp catalytic domain.

This sequence belongs to the influenza viruses polymerase PB1 family. Influenza RNA polymerase is composed of three subunits: PB1, PB2 and PA. Interacts (via N-terminus) with PA (via C-terminus). Interacts (via C-terminus) with PB2 (via N-terminus); this interaction is essential for transcription initiation. Post-translationally, phosphorylated by host PRKCA.

The protein resides in the host nucleus. It localises to the host cytoplasm. The catalysed reaction is RNA(n) + a ribonucleoside 5'-triphosphate = RNA(n+1) + diphosphate. Its function is as follows. RNA-dependent RNA polymerase which is responsible for replication and transcription of virus RNA segments. The transcription of viral mRNAs occurs by a unique mechanism called cap-snatching. 5' methylated caps of cellular mRNAs are cleaved after 10-13 nucleotides by PA. In turn, these short capped RNAs are used as primers by PB1 for transcription of viral mRNAs. During virus replication, PB1 initiates RNA synthesis and copy vRNA into complementary RNA (cRNA) which in turn serves as a template for the production of more vRNAs. The polypeptide is RNA-directed RNA polymerase catalytic subunit (Aves).